Reading from the N-terminus, the 208-residue chain is uncharacterized protein (208 aa).

Residues 1 to 16 (MKFLLIACLAVPAILA) form the signal peptide. Residue Asn79 is glycosylated (N-linked (GlcNAc...) asparagine).

This is an uncharacterized protein from Caenorhabditis elegans.